The chain runs to 105 residues: MAAKIRRNDEVIILAGKDKGKKGKVTKVLTTGKVVVEGINLVKKHQKPVPALGQQGGIVEQEAAIDASNVAVFNAATGKADRIGFRIEDGKKVRFFKSNGETVSN.

This sequence belongs to the universal ribosomal protein uL24 family. Part of the 50S ribosomal subunit.

Functionally, one of two assembly initiator proteins, it binds directly to the 5'-end of the 23S rRNA, where it nucleates assembly of the 50S subunit. Its function is as follows. One of the proteins that surrounds the polypeptide exit tunnel on the outside of the subunit. This Vibrio atlanticus (strain LGP32) (Vibrio splendidus (strain Mel32)) protein is Large ribosomal subunit protein uL24.